Reading from the N-terminus, the 316-residue chain is CXXC-type zinc finger protein 5 (316 aa).

The segment covering 1 to 10 (MSSLGGGSQD) has biased composition (gly residues). A disordered region spans residues 1 to 95 (MSSLGGGSQD…SGGAGSMMGG (95 aa)). 2 stretches are compositionally biased toward low complexity: residues 11-27 (AGGS…SGSG) and 36-50 (SATV…VADD). Residues 250–291 (GKKKRKRCGMCAPCRRRINCEQCSSCRNRKTGHQICKFRKCE) form a CXXC-type zinc finger. The Nuclear localization signal motif lies at 251–256 (KKKRKR). Zn(2+) contacts are provided by C257, C260, C263, C269, C272, C275, C285, and C290.

In terms of assembly, interacts with DVL1. Interacts with RBPJ. Expressed in neural stem cells (at protein level). Expressed in the dorsal telencephalon.

The protein localises to the nucleus. It is found in the cytoplasm. Its function is as follows. May indirectly participate in activation of the NF-kappa-B and MAPK pathways. Required for DNA damage-induced ATM phosphorylation, p53 activation and cell cycle arrest. Involved in myelopoiesis. Acts as a mediator of BMP4-mediated modulation of canonical Wnt signaling activity in neural stem cells. Binds to the oxygen responsive element of COX4I2 and represses its transcription under hypoxia conditions (4% oxygen), as well as normoxia conditions (20% oxygen). May repress COX4I2 transactivation induced by CHCHD2 and RBPJ. Binds preferentially to DNA containing cytidine-phosphate-guanosine (CpG) dinucleotides over CpH (H=A, T, and C), hemimethylated-CpG and hemimethylated-hydroxymethyl-CpG. The sequence is that of CXXC-type zinc finger protein 5 (Cxxc5) from Rattus norvegicus (Rat).